Consider the following 96-residue polypeptide: UPF0235 protein YggU (96 aa).

Belongs to the UPF0235 family.

The polypeptide is UPF0235 protein YggU (Escherichia coli (strain K12 / MC4100 / BW2952)).